A 562-amino-acid chain; its full sequence is Dihydroxy-acid dehydratase (562 aa).

C53 contributes to the [2Fe-2S] cluster binding site. Mg(2+) is bound at residue D85. C126 is a binding site for [2Fe-2S] cluster. 2 residues coordinate Mg(2+): D127 and K128. At K128 the chain carries N6-carboxylysine. C198 contacts [2Fe-2S] cluster. E449 is a binding site for Mg(2+). Residue S475 is the Proton acceptor of the active site.

This sequence belongs to the IlvD/Edd family. Homodimer. The cofactor is [2Fe-2S] cluster. Requires Mg(2+) as cofactor.

The enzyme catalyses (2R)-2,3-dihydroxy-3-methylbutanoate = 3-methyl-2-oxobutanoate + H2O. It carries out the reaction (2R,3R)-2,3-dihydroxy-3-methylpentanoate = (S)-3-methyl-2-oxopentanoate + H2O. Its pathway is amino-acid biosynthesis; L-isoleucine biosynthesis; L-isoleucine from 2-oxobutanoate: step 3/4. The protein operates within amino-acid biosynthesis; L-valine biosynthesis; L-valine from pyruvate: step 3/4. In terms of biological role, functions in the biosynthesis of branched-chain amino acids. Catalyzes the dehydration of (2R,3R)-2,3-dihydroxy-3-methylpentanoate (2,3-dihydroxy-3-methylvalerate) into 2-oxo-3-methylpentanoate (2-oxo-3-methylvalerate) and of (2R)-2,3-dihydroxy-3-methylbutanoate (2,3-dihydroxyisovalerate) into 2-oxo-3-methylbutanoate (2-oxoisovalerate), the penultimate precursor to L-isoleucine and L-valine, respectively. This is Dihydroxy-acid dehydratase from Methylococcus capsulatus (strain ATCC 33009 / NCIMB 11132 / Bath).